Here is a 174-residue protein sequence, read N- to C-terminus: Inactive signal peptidase IA (174 aa).

Residues 1–7 (MKKVVKY) lie on the Cytoplasmic side of the membrane. A helical transmembrane segment spans residues 8–28 (LISLILAIIIVLFVQTFVIVG). Topologically, residues 29-174 (HVIPNNDMSP…FSKWTIQFKS (146 aa)) are extracellular.

Belongs to the peptidase S26 family.

The protein localises to the cell membrane. Functionally, catalytically inactive. In Staphylococcus aureus (strain MRSA252), this protein is Inactive signal peptidase IA (spsA).